We begin with the raw amino-acid sequence, 99 residues long: Beta-2-microglobulin (99 aa).

Residues 5–93 form the Ig-like C1-type domain; sequence PRVQVYSRHP…HITLSEPKIV (89 aa). Cysteines 25 and 80 form a disulfide.

This sequence belongs to the beta-2-microglobulin family. In terms of assembly, heterodimer of an alpha chain and a beta chain. Beta-2-microglobulin is the beta-chain of major histocompatibility complex class I molecules.

The protein resides in the secreted. In terms of biological role, component of the class I major histocompatibility complex (MHC). Involved in the presentation of peptide antigens to the immune system. The protein is Beta-2-microglobulin (B2M) of Cavia porcellus (Guinea pig).